The primary structure comprises 283 residues: Phosphatidylserine decarboxylase proenzyme (283 aa).

Residues Asp-88, His-145, and Ser-248 each act as charge relay system; for autoendoproteolytic cleavage activity in the active site. Ser-248 functions as the Schiff-base intermediate with substrate; via pyruvic acid; for decarboxylase activity in the catalytic mechanism. Ser-248 is modified (pyruvic acid (Ser); by autocatalysis).

It belongs to the phosphatidylserine decarboxylase family. PSD-B subfamily. Prokaryotic type I sub-subfamily. Heterodimer of a large membrane-associated beta subunit and a small pyruvoyl-containing alpha subunit. Pyruvate is required as a cofactor. Is synthesized initially as an inactive proenzyme. Formation of the active enzyme involves a self-maturation process in which the active site pyruvoyl group is generated from an internal serine residue via an autocatalytic post-translational modification. Two non-identical subunits are generated from the proenzyme in this reaction, and the pyruvate is formed at the N-terminus of the alpha chain, which is derived from the carboxyl end of the proenzyme. The autoendoproteolytic cleavage occurs by a canonical serine protease mechanism, in which the side chain hydroxyl group of the serine supplies its oxygen atom to form the C-terminus of the beta chain, while the remainder of the serine residue undergoes an oxidative deamination to produce ammonia and the pyruvoyl prosthetic group on the alpha chain. During this reaction, the Ser that is part of the protease active site of the proenzyme becomes the pyruvoyl prosthetic group, which constitutes an essential element of the active site of the mature decarboxylase.

The protein localises to the cell membrane. It catalyses the reaction a 1,2-diacyl-sn-glycero-3-phospho-L-serine + H(+) = a 1,2-diacyl-sn-glycero-3-phosphoethanolamine + CO2. It functions in the pathway phospholipid metabolism; phosphatidylethanolamine biosynthesis; phosphatidylethanolamine from CDP-diacylglycerol: step 2/2. In terms of biological role, catalyzes the formation of phosphatidylethanolamine (PtdEtn) from phosphatidylserine (PtdSer). This chain is Phosphatidylserine decarboxylase proenzyme, found in Acidovorax ebreus (strain TPSY) (Diaphorobacter sp. (strain TPSY)).